Here is a 29-residue protein sequence, read N- to C-terminus: MEIDVLGWVALLVVFTWSIAMVVWGRNGL.

A helical membrane pass occupies residues 3–23 (IDVLGWVALLVVFTWSIAMVV).

It belongs to the PetN family. In terms of assembly, the 4 large subunits of the cytochrome b6-f complex are cytochrome b6, subunit IV (17 kDa polypeptide, PetD), cytochrome f and the Rieske protein, while the 4 small subunits are PetG, PetL, PetM and PetN. The complex functions as a dimer.

The protein resides in the cellular thylakoid membrane. Its function is as follows. Component of the cytochrome b6-f complex, which mediates electron transfer between photosystem II (PSII) and photosystem I (PSI), cyclic electron flow around PSI, and state transitions. In Mastigocladus laminosus (Fischerella sp.), this protein is Cytochrome b6-f complex subunit 8.